Here is an 871-residue protein sequence, read N- to C-terminus: Phosphoinositide 3-kinase regulatory subunit 5 (871 aa).

At methionine 1 the chain carries N-acetylmethionine. The tract at residues 25-101 is heterodimerization; that stretch reads SLGRRSAPWS…TPHFPPDSDL (77 aa). The disordered stretch occupies residues 381–413; it reads MDSGYVEDSEENSEWPQKPGSQKRQGHRRPGQK. Phosphoserine is present on residues serine 451 and serine 500. The segment at 646 to 746 is interaction with beta-gamma G protein dimers; that stretch reads PILADMLLYY…WSNLEKVCTS (101 aa).

As to quaternary structure, heterodimer of a catalytic subunit (PIK3CG/p120) and a regulatory (PIK3R5a/p101) subunit. Interacts with beta-gamma G protein dimers.

Its subcellular location is the nucleus. The protein resides in the cytoplasm. The protein localises to the cell membrane. With respect to regulation, greatly activated by G gamma proteins. Regulatory subunit of the PI3K gamma complex. Required for recruitment of the catalytic subunit to the plasma membrane via interaction with beta-gamma G protein dimers. Required for G protein-mediated activation of PIK3CG. In Mus musculus (Mouse), this protein is Phosphoinositide 3-kinase regulatory subunit 5 (Pik3r5).